The sequence spans 483 residues: Isocitrate dehydrogenase [NADP] (483 aa).

Thr74 contacts NADP(+). The D-threo-isocitrate site is built by Ser83, Asn85, Arg89, Arg99, and Arg121. A Mg(2+)-binding site is contributed by Asp232. Residues 264–270 (HGSAPDI) and Asn277 each bind NADP(+).

It belongs to the isocitrate and isopropylmalate dehydrogenases family. In terms of assembly, homodimer. Requires Mg(2+) as cofactor. It depends on Mn(2+) as a cofactor.

The catalysed reaction is D-threo-isocitrate + NADP(+) = 2-oxoglutarate + CO2 + NADPH. Catalyzes the oxidative decarboxylation of isocitrate to 2-oxoglutarate and carbon dioxide with the concomitant reduction of NADP(+). The chain is Isocitrate dehydrogenase [NADP] (icd) from Rickettsia typhi (strain ATCC VR-144 / Wilmington).